The primary structure comprises 303 residues: Phospholipase A1 2 (303 aa).

Cys-6 and Cys-90 are joined by a disulfide. The active-site Nucleophile is the Ser-140. Asp-168 (charge relay system) is an active-site residue. Cys-179 and Cys-184 are disulfide-bonded. The active-site Charge relay system is the His-232. 3 cysteine pairs are disulfide-bonded: Cys-247–Cys-271, Cys-248–Cys-296, and Cys-264–Cys-269.

Belongs to the AB hydrolase superfamily. Lipase family. Expressed by the venom gland.

It is found in the secreted. It catalyses the reaction a 1,2-diacyl-sn-glycero-3-phosphocholine + H2O = a 2-acyl-sn-glycero-3-phosphocholine + a fatty acid + H(+). Catalyzes the hydrolysis of phosphatidylcholine with phospholipase A1 activity. May act as an allergen and induce hemolytic activity. The protein is Phospholipase A1 2 of Dolichovespula maculata (Bald-faced hornet).